We begin with the raw amino-acid sequence, 136 residues long: MAKKSSSRLPKRKGEYTYRGKTVSELQELSLEEFAELLPSRERRSLKRGFTDGQKKVLHEFKEGKKIRTHHRDMIILPEMIGKTIEIHNGKGFVSVDLQPEMVGHRFGEFAPTRSRVSHGSAGVGATRSSKFVPLK.

A disordered region spans residues 114-136 (RSRVSHGSAGVGATRSSKFVPLK).

Belongs to the universal ribosomal protein uS19 family.

Its function is as follows. Protein S19 forms a complex with S13 that binds strongly to the 16S ribosomal RNA. The sequence is that of Small ribosomal subunit protein uS19 from Methanosarcina acetivorans (strain ATCC 35395 / DSM 2834 / JCM 12185 / C2A).